A 288-amino-acid polypeptide reads, in one-letter code: Programmed cell death protein 1 (288 aa).

Positions 1–24 (MWVRQVPWSFTWAVLQLSWQSGWL) are cleaved as a signal peptide. The Extracellular segment spans residues 25 to 169 (LEVPNGPWRS…PKPEGRFQGM (145 aa)). One can recognise an Ig-like V-type domain in the interval 31-139 (PWRSLTFYPA…PKAKIEESPG (109 aa)). N-linked (GlcNAc...) asparagine glycosylation is found at Asn49, Asn58, Asn74, and Asn116. A disulfide bridge links Cys54 with Cys123. The interaction with CD274/PDCD1L1 stretch occupies residues 70-77 (LSPSNQTE). Residues 170–190 (VIGIMSALVGIPVLLLLAWAL) form a helical membrane-spanning segment. Residues 191–288 (AVFCSTSMSE…HEDGHCSWPL (98 aa)) are Cytoplasmic-facing. The ITIM motif signature appears at 223 to 228 (VAYEEL). The residue at position 225 (Tyr225) is a Phosphotyrosine. Lys235 participates in a covalent cross-link: Glycyl lysine isopeptide (Lys-Gly) (interchain with G-Cter in ubiquitin). Thr236 is modified (phosphothreonine; by MAPK3). Positions 247-251 (EYATI) match the ITSM motif motif. A Phosphotyrosine modification is found at Tyr248. Residues 263-288 (GRRGSADGLQGPRPPRHEDGHCSWPL) are disordered. Positions 277-288 (PRHEDGHCSWPL) are enriched in basic and acidic residues.

As to quaternary structure, monomer. Interacts with CD274/PDCD1L1. Interacts with CD273/PDCD1LG2. Interacts with FBXO38; leading to ubiquitination and degradation by the proteasome. In terms of processing, ubiquitinated at Lys-235 by the SCF(FBXO38) complex, leading to its proteasomal degradation. Ubiquitinated via 'Lys-48'-linked polyubiquitin chains. Deubiquitinated and thus stabilized by USP5. Post-translationally, tyrosine phosphorylated at Tyr-225 (within ITIM motif) and Tyr-248 (ITSM motif) upon ligand binding. Phosphorylation at Tyr-248 promotes the recruitment of the protein tyrosine phosphatase PTPN11/SHP-2 that mediates dephosphorylation of key TCR proximal signaling molecules, such as ZAP70, PRKCQ/PKCtheta and CD247/CD3zeta. Phosphorylation at Thr-236 promotes the recruitment of the deubiquitinase USP5. In terms of tissue distribution, thymus-specific.

The protein resides in the cell membrane. Functionally, inhibitory receptor on antigen activated T-cells that plays a critical role in induction and maintenance of immune tolerance to self. Delivers inhibitory signals upon binding to ligands, such as CD274/PDCD1L1 and CD273/PDCD1LG2. Following T-cell receptor (TCR) engagement, PDCD1 associates with CD3-TCR in the immunological synapse and directly inhibits T-cell activation. Suppresses T-cell activation through the recruitment of PTPN11/SHP-2: following ligand-binding, PDCD1 is phosphorylated within the ITSM motif, leading to the recruitment of the protein tyrosine phosphatase PTPN11/SHP-2 that mediates dephosphorylation of key TCR proximal signaling molecules, such as ZAP70, PRKCQ/PKCtheta and CD247/CD3zeta. The PDCD1-mediated inhibitory pathway is exploited by tumors to attenuate anti-tumor immunity and facilitate tumor survival. The chain is Programmed cell death protein 1 from Mus musculus (Mouse).